A 207-amino-acid polypeptide reads, in one-letter code: Chaperone protein TorD (207 aa).

This sequence belongs to the TorD/DmsD family. TorD subfamily.

The protein resides in the cytoplasm. In terms of biological role, involved in the biogenesis of TorA. Acts on TorA before the insertion of the molybdenum cofactor and, as a result, probably favors a conformation of the apoenzyme that is competent for acquiring the cofactor. This chain is Chaperone protein TorD, found in Aggregatibacter aphrophilus (strain NJ8700) (Haemophilus aphrophilus).